Here is a 154-residue protein sequence, read N- to C-terminus: Deoxyuridine 5'-triphosphate nucleotidohydrolase (154 aa).

Residues 64–66 (RSG), asparagine 77, 81–83 (TVD), and lysine 91 each bind substrate. Residues 135–154 (LADTTRGDGGHGSSGGHASL) are disordered. A compositionally biased stretch (gly residues) spans 144–154 (GHGSSGGHASL).

This sequence belongs to the dUTPase family. Homotrimer. The cofactor is Mg(2+).

It carries out the reaction dUTP + H2O = dUMP + diphosphate + H(+). It participates in pyrimidine metabolism; dUMP biosynthesis; dUMP from dCTP (dUTP route): step 2/2. Functionally, this enzyme is involved in nucleotide metabolism: it produces dUMP, the immediate precursor of thymidine nucleotides and it decreases the intracellular concentration of dUTP so that uracil cannot be incorporated into DNA. The sequence is that of Deoxyuridine 5'-triphosphate nucleotidohydrolase from Mycolicibacterium vanbaalenii (strain DSM 7251 / JCM 13017 / BCRC 16820 / KCTC 9966 / NRRL B-24157 / PYR-1) (Mycobacterium vanbaalenii).